A 140-amino-acid chain; its full sequence is Nucleoside diphosphate kinase (140 aa).

Lys11, Phe59, Arg87, Thr93, Arg104, and Asn114 together coordinate ATP. The active-site Pros-phosphohistidine intermediate is the His117.

Belongs to the NDK family. In terms of assembly, homotetramer. It depends on Mg(2+) as a cofactor.

Its subcellular location is the cytoplasm. The catalysed reaction is a 2'-deoxyribonucleoside 5'-diphosphate + ATP = a 2'-deoxyribonucleoside 5'-triphosphate + ADP. It carries out the reaction a ribonucleoside 5'-diphosphate + ATP = a ribonucleoside 5'-triphosphate + ADP. Functionally, major role in the synthesis of nucleoside triphosphates other than ATP. The ATP gamma phosphate is transferred to the NDP beta phosphate via a ping-pong mechanism, using a phosphorylated active-site intermediate. This is Nucleoside diphosphate kinase from Rickettsia akari (strain Hartford).